Consider the following 468-residue polypeptide: DNA methyltransferase 1-associated protein 1 (468 aa).

Basic and acidic residues-rich tracts occupy residues 1 to 11 (MATGADVRDIL) and 26 to 48 (SKKD…LTFK). The disordered stretch occupies residues 1 to 48 (MATGADVRDILELGGPEGDAASGTISKKDIINPDKKKSKKSSETLTFK). Residue Lys27 forms a Glycyl lysine isopeptide (Lys-Gly) (interchain with G-Cter in SUMO2) linkage. The SANT domain occupies 149–199 (DDAWTKAETDHLFDLSRRFDLRFVVIHDRYDHQQFKKRSVEDLKERYYHIC). Lys214 participates in a covalent cross-link: Glycyl lysine isopeptide (Lys-Gly) (interchain with G-Cter in SUMO2). The stretch at 225-275 (RRKEQLERLYNRTPEQVAEEEYLLQELRKIEARKKEREKRSQDLQKLITAA) forms a coiled coil. The span at 258–267 (KKEREKRSQD) shows a compositional bias: basic and acidic residues. 2 disordered regions span residues 258 to 305 (KKER…PAVP) and 411 to 468 (AVGP…AKKP). Thr446 is modified (phosphothreonine). Ser449 carries the post-translational modification Phosphoserine.

As to quaternary structure, component of the NuA4 histone acetyltransferase complex which contains the catalytic subunit KAT5/TIP60 and the subunits EP400, TRRAP/PAF400, BRD8/SMAP, EPC1, DMAP1/DNMAP1, RUVBL1/TIP49, RUVBL2, ING3, actin, ACTL6A/BAF53A, MORF4L1/MRG15, MORF4L2/MRGX, MRGBP, YEATS4/GAS41, VPS72/YL1 and MEAF6. Component of a NuA4-related complex which contains EP400, TRRAP/PAF400, SRCAP, BRD8/SMAP, EPC1, DMAP1/DNMAP1, RUVBL1/TIP49, RUVBL2, actin, ACTL6A/BAF53A, VPS72 and YEATS4/GAS41. DMAP1 also forms a complex with DNMT1 and HDAC2. Throughout S phase it interacts directly with the N-terminus of DNMT1, which serves to recruit DMAP1 to replication foci. DMAP1 interacts with ING1, a component of the mSIN3A transcription repressor complex, although this interaction is not required for recruitment of ING1 to heterochromatin. Interacts directly with the transcriptional corepressor TSG101. Interacts with URI1. Interacts with the pro-apoptotic protein DAXX.

It localises to the nucleus. Its subcellular location is the cytoplasm. Involved in transcription repression and activation. Its interaction with HDAC2 may provide a mechanism for histone deacetylation in heterochromatin following replication of DNA at late firing origins. Can also repress transcription independently of histone deacetylase activity. May specifically potentiate DAXX-mediated repression of glucocorticoid receptor-dependent transcription. Component of the NuA4 histone acetyltransferase (HAT) complex which is involved in transcriptional activation of select genes principally by acetylation of nucleosomal histones H4 and H2A. This modification may both alter nucleosome - DNA interactions and promote interaction of the modified histones with other proteins which positively regulate transcription. This complex may be required for the activation of transcriptional programs associated with oncogene and proto-oncogene mediated growth induction, tumor suppressor mediated growth arrest and replicative senescence, apoptosis, and DNA repair. NuA4 may also play a direct role in DNA repair when recruited to sites of DNA damage. Participates in the nuclear localization of URI1 and increases its transcriptional corepressor activity. In Mus musculus (Mouse), this protein is DNA methyltransferase 1-associated protein 1 (Dmap1).